The following is a 325-amino-acid chain: Beta-ketoacyl-[acyl-carrier-protein] synthase III (325 aa).

Residues Cys-116 and His-252 contribute to the active site. Residues 253–257 (QANLR) form an ACP-binding region. Residue Asn-282 is part of the active site.

This sequence belongs to the thiolase-like superfamily. FabH family. In terms of assembly, homodimer.

It localises to the cytoplasm. The enzyme catalyses malonyl-[ACP] + acetyl-CoA + H(+) = 3-oxobutanoyl-[ACP] + CO2 + CoA. The protein operates within lipid metabolism; fatty acid biosynthesis. In terms of biological role, catalyzes the condensation reaction of fatty acid synthesis by the addition to an acyl acceptor of two carbons from malonyl-ACP. Catalyzes the first condensation reaction which initiates fatty acid synthesis and may therefore play a role in governing the total rate of fatty acid production. Possesses both acetoacetyl-ACP synthase and acetyl transacylase activities. Its substrate specificity determines the biosynthesis of branched-chain and/or straight-chain of fatty acids. This Xanthomonas axonopodis pv. citri (strain 306) protein is Beta-ketoacyl-[acyl-carrier-protein] synthase III.